Reading from the N-terminus, the 298-residue chain is Inosose dehydratase 2 (298 aa).

It belongs to the IolE/MocC family. Requires glutathione as cofactor. It depends on Co(2+) as a cofactor. Mn(2+) is required as a cofactor.

The catalysed reaction is scyllo-inosose = 3D-3,5/4-trihydroxycyclohexane-1,2-dione + H2O. The protein operates within polyol metabolism; myo-inositol degradation into acetyl-CoA; acetyl-CoA from myo-inositol: step 2/7. Functionally, catalyzes the dehydration of inosose (2-keto-myo-inositol, 2KMI or 2,4,6/3,5-pentahydroxycyclohexanone) to 3D-(3,5/4)-trihydroxycyclohexane-1,2-dione (D-2,3-diketo-4-deoxy-epi-inositol). In Bacillus cereus (strain ZK / E33L), this protein is Inosose dehydratase 2.